Reading from the N-terminus, the 235-residue chain is Exosome complex component RRP46 (235 aa).

Residues 1-13 (MEEETHTDAKIRA) show a composition bias toward basic and acidic residues. A disordered region spans residues 1–24 (MEEETHTDAKIRAENGTGSSPRGP). Ser-20 carries the phosphoserine modification.

It belongs to the RNase PH family. As to quaternary structure, homodimer. Component of the RNA exosome core complex (Exo-9), composed of EXOSC1, EXOSC2, EXOSC3, EXOSC4, EXOSC5, EXOSC6, EXOSC7, EXOSC8 and EXOSC9; within the complex interacts with EXOSC3, EXOSC8, and EXOSC9. The catalytically inactive RNA exosome core complex (Exo-9) associates with the catalytic subunit EXOSC10/RRP6. Exo-9 may associate with DIS3 to form the nucleolar exosome complex, or DIS3L to form the cytoplasmic exosome complex. Exo-9 is formed by a hexameric base ring consisting of the heterodimers EXOSC4-EXOSC9, EXOSC5-EXOSC8 and EXOSC6-EXOSC7, and a cap ring consisting of EXOSC1, EXOSC2 and EXOSC3. The RNA exosome complex associates with cofactors C1D/RRP47, MPHOSPH6/MPP6 and MTREX/MTR4. Interacts with GTPBP1. Interacts with ZC3HAV1. Interacts with DDX17 only in the presence of ZC3HAV1 in an RNA-independent manner. In terms of tissue distribution, highly expressed in a variety of hematopoietic and epithelial tumor cell lines, but not in normal hematopoietic tissues or other normal tissue, with the exception of testis.

The protein localises to the nucleus. It is found in the nucleolus. It localises to the cytoplasm. Non-catalytic component of the RNA exosome complex which has 3'-&gt;5' exoribonuclease activity and participates in a multitude of cellular RNA processing and degradation events. In the nucleus, the RNA exosome complex is involved in proper maturation of stable RNA species such as rRNA, snRNA and snoRNA, in the elimination of RNA processing by-products and non-coding 'pervasive' transcripts, such as antisense RNA species and promoter-upstream transcripts (PROMPTs), and of mRNAs with processing defects, thereby limiting or excluding their export to the cytoplasm. The RNA exosome may be involved in Ig class switch recombination (CSR) and/or Ig variable region somatic hypermutation (SHM) by targeting AICDA deamination activity to transcribed dsDNA substrates. In the cytoplasm, the RNA exosome complex is involved in general mRNA turnover and specifically degrades inherently unstable mRNAs containing AU-rich elements (AREs) within their 3' untranslated regions, and in RNA surveillance pathways, preventing translation of aberrant mRNAs. It seems to be involved in degradation of histone mRNA. The catalytic inactive RNA exosome core complex of 9 subunits (Exo-9) is proposed to play a pivotal role in the binding and presentation of RNA for ribonucleolysis, and to serve as a scaffold for the association with catalytic subunits and accessory proteins or complexes. In vitro, EXOSC5 does not bind or digest single-stranded RNA and binds to double-stranded DNA without detectable DNase activity. The chain is Exosome complex component RRP46 (EXOSC5) from Homo sapiens (Human).